The sequence spans 247 residues: NAD(P)H-quinone oxidoreductase subunit K (247 aa).

Residues cysteine 63, cysteine 64, cysteine 128, and cysteine 159 each contribute to the [4Fe-4S] cluster site. Residues 218-247 are disordered; sequence TRQAPPKELTEAIGMEVPPALASQKQKEEA.

This sequence belongs to the complex I 20 kDa subunit family. In terms of assembly, NDH-1 can be composed of about 15 different subunits; different subcomplexes with different compositions have been identified which probably have different functions. Requires [4Fe-4S] cluster as cofactor.

The protein localises to the cellular thylakoid membrane. The enzyme catalyses a plastoquinone + NADH + (n+1) H(+)(in) = a plastoquinol + NAD(+) + n H(+)(out). It catalyses the reaction a plastoquinone + NADPH + (n+1) H(+)(in) = a plastoquinol + NADP(+) + n H(+)(out). Its function is as follows. NDH-1 shuttles electrons from an unknown electron donor, via FMN and iron-sulfur (Fe-S) centers, to quinones in the respiratory and/or the photosynthetic chain. The immediate electron acceptor for the enzyme in this species is believed to be plastoquinone. Couples the redox reaction to proton translocation, and thus conserves the redox energy in a proton gradient. Cyanobacterial NDH-1 also plays a role in inorganic carbon-concentration. This chain is NAD(P)H-quinone oxidoreductase subunit K, found in Crocosphaera subtropica (strain ATCC 51142 / BH68) (Cyanothece sp. (strain ATCC 51142)).